The chain runs to 167 residues: Translationally-controlled tumor protein homolog (167 aa).

The TCTP domain occupies 1–167 (MLIYQDVLTG…WKDGLKEIKI (167 aa)).

Belongs to the TCTP family.

The protein resides in the cytoplasm. The protein localises to the cytoskeleton. Functionally, involved in protein synthesis. Involved in microtubule stabilization. This is Translationally-controlled tumor protein homolog from Cryptococcus neoformans var. neoformans serotype D (strain B-3501A) (Filobasidiella neoformans).